We begin with the raw amino-acid sequence, 464 residues long: Probable mannosyltransferase KTR4 (464 aa).

The Cytoplasmic portion of the chain corresponds to 1–11; the sequence is MRFLSKRILKP. Residues 12-32 traverse the membrane as a helical; Signal-anchor for type II membrane protein segment; the sequence is VLSVIILISIAVTVVLYFLTA. The stem region stretch occupies residues 33-130; the sequence is NENYLQAVKD…NLVRSGDPLA (98 aa). The Lumenal portion of the chain corresponds to 33–464; that stretch reads NENYLQAVKD…SMSEEELEMY (432 aa). Residues 131-464 form a catalytic region; sequence GKAKGTILSL…SMSEEELEMY (334 aa). Catalysis depends on E352, which acts as the Nucleophile.

Belongs to the glycosyltransferase 15 family.

The protein localises to the membrane. Its function is as follows. Possible glycosyltransferase that transfers an alpha-D-mannosyl residue from GDP-mannose into lipid-linked oligosaccharide, forming an alpha-(1-&gt;2)-D-mannosyl-D-mannose linkage. The protein is Probable mannosyltransferase KTR4 (KTR4) of Saccharomyces cerevisiae (strain ATCC 204508 / S288c) (Baker's yeast).